The sequence spans 246 residues: MAAVDIRDNLLGISWVDSSWIPILNSGSVLDYFSERSNPFYDRTCNNEVVKMQRLTLEHLNQMVGIEYILLHAQEPILFIIRKQQRQSPAQVIPLADYYIIAGVIYQAPDLGSVINSRVLTAVHGIQSAFDEAMSYCRYHPSKGYWWHFKDHEEQDKVRPKAKRKEEPSSIFQRQRVDALLLDLRQKFPPKFVQLKPGEKPVPVDQTKKEAEPIPETVKPEEKETTKNVQQTVSAKGPPEKRMRLQ.

A disordered region spans residues 193 to 246 (VQLKPGEKPVPVDQTKKEAEPIPETVKPEEKETTKNVQQTVSAKGPPEKRMRLQ). Residues 206 to 226 (QTKKEAEPIPETVKPEEKETT) show a composition bias toward basic and acidic residues. Lys208 is covalently cross-linked (Glycyl lysine isopeptide (Lys-Gly) (interchain with G-Cter in SUMO2)). Residues Lys236 and Lys241 each carry the N6-acetyllysine modification.

Belongs to the Mediator complex subunit 6 family. In terms of assembly, component of the Mediator complex, which is composed of MED1, MED4, MED6, MED7, MED8, MED9, MED10, MED11, MED12, MED13, MED13L, MED14, MED15, MED16, MED17, MED18, MED19, MED20, MED21, MED22, MED23, MED24, MED25, MED26, MED27, MED29, MED30, MED31, CCNC, CDK8 and CDC2L6/CDK11. The MED12, MED13, CCNC and CDK8 subunits form a distinct module termed the CDK8 module. Mediator containing the CDK8 module is less active than Mediator lacking this module in supporting transcriptional activation. Individual preparations of the Mediator complex lacking one or more distinct subunits have been variously termed ARC, CRSP, DRIP, PC2, SMCC and TRAP. Interacts with CTNNB1 and GLI3.

Its subcellular location is the nucleus. In terms of biological role, component of the Mediator complex, a coactivator involved in the regulated transcription of nearly all RNA polymerase II-dependent genes. Mediator functions as a bridge to convey information from gene-specific regulatory proteins to the basal RNA polymerase II transcription machinery. Mediator is recruited to promoters by direct interactions with regulatory proteins and serves as a scaffold for the assembly of a functional preinitiation complex with RNA polymerase II and the general transcription factors. This Homo sapiens (Human) protein is Mediator of RNA polymerase II transcription subunit 6 (MED6).